Here is a 323-residue protein sequence, read N- to C-terminus: tRNA U34 carboxymethyltransferase (323 aa).

Carboxy-S-adenosyl-L-methionine contacts are provided by residues Lys91, Trp105, Lys110, Gly130, 152 to 154 (DPS), 181 to 182 (IE), Met196, Tyr200, and Arg315.

It belongs to the class I-like SAM-binding methyltransferase superfamily. CmoB family. Homotetramer.

The catalysed reaction is carboxy-S-adenosyl-L-methionine + 5-hydroxyuridine(34) in tRNA = 5-carboxymethoxyuridine(34) in tRNA + S-adenosyl-L-homocysteine + H(+). In terms of biological role, catalyzes carboxymethyl transfer from carboxy-S-adenosyl-L-methionine (Cx-SAM) to 5-hydroxyuridine (ho5U) to form 5-carboxymethoxyuridine (cmo5U) at position 34 in tRNAs. The protein is tRNA U34 carboxymethyltransferase of Vibrio atlanticus (strain LGP32) (Vibrio splendidus (strain Mel32)).